The primary structure comprises 225 residues: Phosphoribosylformylglycinamidine synthase subunit PurQ (225 aa).

Positions 5–225 (SAVITFPGSN…ESVVRGLVEA (221 aa)) constitute a Glutamine amidotransferase type-1 domain. The active-site Nucleophile is the Cys89. Catalysis depends on residues His197 and Glu199.

Part of the FGAM synthase complex composed of 1 PurL, 1 PurQ and 2 PurS subunits.

It localises to the cytoplasm. It catalyses the reaction N(2)-formyl-N(1)-(5-phospho-beta-D-ribosyl)glycinamide + L-glutamine + ATP + H2O = 2-formamido-N(1)-(5-O-phospho-beta-D-ribosyl)acetamidine + L-glutamate + ADP + phosphate + H(+). It carries out the reaction L-glutamine + H2O = L-glutamate + NH4(+). It functions in the pathway purine metabolism; IMP biosynthesis via de novo pathway; 5-amino-1-(5-phospho-D-ribosyl)imidazole from N(2)-formyl-N(1)-(5-phospho-D-ribosyl)glycinamide: step 1/2. Its function is as follows. Part of the phosphoribosylformylglycinamidine synthase complex involved in the purines biosynthetic pathway. Catalyzes the ATP-dependent conversion of formylglycinamide ribonucleotide (FGAR) and glutamine to yield formylglycinamidine ribonucleotide (FGAM) and glutamate. The FGAM synthase complex is composed of three subunits. PurQ produces an ammonia molecule by converting glutamine to glutamate. PurL transfers the ammonia molecule to FGAR to form FGAM in an ATP-dependent manner. PurS interacts with PurQ and PurL and is thought to assist in the transfer of the ammonia molecule from PurQ to PurL. The chain is Phosphoribosylformylglycinamidine synthase subunit PurQ from Novosphingobium aromaticivorans (strain ATCC 700278 / DSM 12444 / CCUG 56034 / CIP 105152 / NBRC 16084 / F199).